The following is a 435-amino-acid chain: Histidinol dehydrogenase (435 aa).

Residues Tyr-131, Gln-189, and Asn-212 each coordinate NAD(+). Positions 238, 260, and 263 each coordinate substrate. The Zn(2+) site is built by Gln-260 and His-263. Residues Glu-327 and His-328 each act as proton acceptor in the active site. Residues His-328, Asp-361, Glu-415, and His-420 each contribute to the substrate site. Residue Asp-361 participates in Zn(2+) binding. His-420 provides a ligand contact to Zn(2+).

It belongs to the histidinol dehydrogenase family. As to quaternary structure, homodimer. Zn(2+) is required as a cofactor.

The catalysed reaction is L-histidinol + 2 NAD(+) + H2O = L-histidine + 2 NADH + 3 H(+). It participates in amino-acid biosynthesis; L-histidine biosynthesis; L-histidine from 5-phospho-alpha-D-ribose 1-diphosphate: step 9/9. Functionally, catalyzes the sequential NAD-dependent oxidations of L-histidinol to L-histidinaldehyde and then to L-histidine. The chain is Histidinol dehydrogenase from Buchnera aphidicola subsp. Baizongia pistaciae (strain Bp).